The following is a 65-amino-acid chain: Hainantoxin-X.3 (65 aa).

A signal peptide spans 1 to 20; it reads MNMKILVLVAVLCLVVSTHA. Residues 21 to 37 constitute a propeptide that is removed on maturation; that stretch reads ERHSKTDMGDSPMIQER. 3 cysteine pairs are disulfide-bonded: cysteine 39–cysteine 56, cysteine 46–cysteine 59, and cysteine 55–cysteine 64.

Belongs to the neurotoxin 36 family. 02 subfamily. As to expression, expressed by the venom gland.

The protein resides in the secreted. In terms of biological role, reversibly blocks N-type calcium channels (Cav2.2/CACNA1B) in rat dorsal root ganglion cells. Elicits no toxic symptoms in either vertebrates or invertebrates during a period of 48 hours post-injection, when it was assayed in vivo by direct injection into mice and cockroaches. The polypeptide is Hainantoxin-X.3 (Cyriopagopus hainanus (Chinese bird spider)).